The chain runs to 390 residues: GTPase Obg (390 aa).

In terms of domain architecture, Obg spans 1-159 (MKFIDEALIR…RDLQLELMLL (159 aa)). The OBG-type G domain maps to 160 to 333 (ADVGMLGLPN…LCRDIMDFIE (174 aa)). GTP contacts are provided by residues 166-173 (GLPNAGKS), 191-195 (FTTLV), 213-216 (DIPG), 283-286 (NKID), and 314-316 (SAV). 2 residues coordinate Mg(2+): Ser173 and Thr193. Positions 363–390 (DHQFEDEDEDWDDWSEEDEEGVETIYKP) are disordered. A compositionally biased stretch (acidic residues) spans 366–384 (FEDEDEDWDDWSEEDEEGV).

The protein belongs to the TRAFAC class OBG-HflX-like GTPase superfamily. OBG GTPase family. In terms of assembly, monomer. It depends on Mg(2+) as a cofactor.

Its subcellular location is the cytoplasm. Its function is as follows. An essential GTPase which binds GTP, GDP and possibly (p)ppGpp with moderate affinity, with high nucleotide exchange rates and a fairly low GTP hydrolysis rate. Plays a role in control of the cell cycle, stress response, ribosome biogenesis and in those bacteria that undergo differentiation, in morphogenesis control. The sequence is that of GTPase Obg from Pasteurella multocida (strain Pm70).